Here is a 411-residue protein sequence, read N- to C-terminus: Tyrosine--tRNA ligase (411 aa).

Residue Y34 participates in L-tyrosine binding. The short motif at 39-48 (CTATSLHIGS) is the 'HIGH' region element. L-tyrosine is bound by residues Y171 and Q175. The short motif at 231 to 235 (KMGKT) is the 'KMSKS' region element. K234 serves as a coordination point for ATP. Residues 345-411 (ISAYKLFYNV…GKKRHILVKV (67 aa)) enclose the S4 RNA-binding domain.

It belongs to the class-I aminoacyl-tRNA synthetase family. TyrS type 1 subfamily. As to quaternary structure, homodimer.

It is found in the cytoplasm. The catalysed reaction is tRNA(Tyr) + L-tyrosine + ATP = L-tyrosyl-tRNA(Tyr) + AMP + diphosphate + H(+). In terms of biological role, catalyzes the attachment of tyrosine to tRNA(Tyr) in a two-step reaction: tyrosine is first activated by ATP to form Tyr-AMP and then transferred to the acceptor end of tRNA(Tyr). In Rickettsia typhi (strain ATCC VR-144 / Wilmington), this protein is Tyrosine--tRNA ligase.